A 126-amino-acid polypeptide reads, in one-letter code: Spermidine export protein MdtJ (126 aa).

4 helical membrane passes run 1 to 21 (MIYW…TLSM), 30 to 50 (ITGH…LSLA), 54 to 74 (VALG…ITLF), and 81 to 101 (EPFS…IVML).

Belongs to the drug/metabolite transporter (DMT) superfamily. Small multidrug resistance (SMR) (TC 2.A.7.1) family. MdtJ subfamily. In terms of assembly, forms a complex with MdtI.

The protein localises to the cell inner membrane. Functionally, catalyzes the excretion of spermidine. This Sodalis glossinidius (strain morsitans) protein is Spermidine export protein MdtJ.